Consider the following 42-residue polypeptide: Photosystem II reaction center protein J (42 aa).

Residues 10–30 (IPLWLVGTVVGTLAIGLLAVF) form a helical membrane-spanning segment.

This sequence belongs to the PsbJ family. In terms of assembly, PSII is composed of 1 copy each of membrane proteins PsbA, PsbB, PsbC, PsbD, PsbE, PsbF, PsbH, PsbI, PsbJ, PsbK, PsbL, PsbM, PsbT, PsbX, PsbY, PsbZ, Psb30/Ycf12, at least 3 peripheral proteins of the oxygen-evolving complex and a large number of cofactors. It forms dimeric complexes.

It is found in the plastid. Its subcellular location is the chloroplast thylakoid membrane. In terms of biological role, one of the components of the core complex of photosystem II (PSII). PSII is a light-driven water:plastoquinone oxidoreductase that uses light energy to abstract electrons from H(2)O, generating O(2) and a proton gradient subsequently used for ATP formation. It consists of a core antenna complex that captures photons, and an electron transfer chain that converts photonic excitation into a charge separation. This chain is Photosystem II reaction center protein J, found in Chlamydomonas reinhardtii (Chlamydomonas smithii).